A 962-amino-acid chain; its full sequence is Nonsense-mediated mRNA decay factor SMG8 (962 aa).

The disordered stretch occupies residues Arg-634–Ala-661. Residues Ser-639–Ala-661 show a composition bias toward low complexity.

It belongs to the SMG8 family.

In terms of biological role, involved in nonsense-mediated decay (NMD) of mRNAs containing premature stop codons. Probable component of kinase complex containing nonC and recruited to stalled ribosomes. This chain is Nonsense-mediated mRNA decay factor SMG8, found in Drosophila virilis (Fruit fly).